The sequence spans 141 residues: Large ribosomal subunit protein uL16 (141 aa).

Belongs to the universal ribosomal protein uL16 family. As to quaternary structure, part of the 50S ribosomal subunit.

In terms of biological role, binds 23S rRNA and is also seen to make contacts with the A and possibly P site tRNAs. The sequence is that of Large ribosomal subunit protein uL16 from Thermus thermophilus (strain ATCC BAA-163 / DSM 7039 / HB27).